A 356-amino-acid chain; its full sequence is Protein trichome birefringence-like 41 (356 aa).

A helical; Signal-anchor for type II membrane protein transmembrane segment spans residues 12–31 (SALVLSLLLLLLLPLLHEAA). The GDS motif motif lies at 107-109 (GDS). A DCXHWCLPGXXDXWN motif motif is present at residues 333-347 (DCSHWCLSGVPDTWN).

It belongs to the PC-esterase family. TBL subfamily.

It localises to the membrane. May act as a bridging protein that binds pectin and other cell wall polysaccharides. Probably involved in maintaining esterification of pectins. May be involved in the specific O-acetylation of cell wall polymers. The sequence is that of Protein trichome birefringence-like 41 (TBL41) from Arabidopsis thaliana (Mouse-ear cress).